A 565-amino-acid polypeptide reads, in one-letter code: Carboxylesterase 1D (565 aa).

A signal peptide spans 1–18 (MRLYPLVWLFLAACTAWG). Asn-79 is a glycosylation site (N-linked (GlcNAc...) asparagine). A disulfide bridge connects residues Cys-87 and Cys-116. The active-site Acyl-ester intermediate is Ser-221. An intrachain disulfide couples Cys-273 to Cys-284. Residue Glu-353 is the Charge relay system of the active site. The residue at position 382 (Lys-382) is an N6-succinyllysine. His-466 serves as the catalytic Charge relay system. Residue Asn-489 is glycosylated (N-linked (GlcNAc...) asparagine). Positions 562-565 (HVEL) match the Prevents secretion from ER motif.

This sequence belongs to the type-B carboxylesterase/lipase family. As to quaternary structure, homotrimer. Detected in liver, lung and testis, but not in kidney (at protein level).

The protein localises to the endoplasmic reticulum lumen. It localises to the cytoplasm. Its subcellular location is the cytosol. The protein resides in the lipid droplet. It is found in the microsome. The catalysed reaction is all-trans-retinyl hexadecanoate + H2O = all-trans-retinol + hexadecanoate + H(+). The enzyme catalyses a carboxylic ester + H2O = an alcohol + a carboxylate + H(+). It catalyses the reaction a long-chain fatty acyl ethyl ester + H2O = a long-chain fatty acid + ethanol + H(+). FAEE-synthesizing and PNPB-hydrolyzing activities are both inhibited by DFP. Major lipase in white adipose tissue. Involved in the metabolism of xenobiotics and of natural substrates. Hydrolyzes triacylglycerols and monoacylglycerols, with a preference for monoacylglycerols. The susceptibility of the substrate increases with decreasing acyl chain length of the fatty acid moiety. Catalyzes the synthesis of fatty acid ethyl esters. Hydrolyzes retinyl esters. The protein is Carboxylesterase 1D of Rattus norvegicus (Rat).